A 253-amino-acid chain; its full sequence is uncharacterized protein (253 aa).

10–34 (LVTGASSGLGRGLALWLARRGVRVF) is a binding site for NADP(+). Position 142 (serine 142) interacts with substrate. Residue tyrosine 155 is the Proton acceptor of the active site.

The protein belongs to the short-chain dehydrogenases/reductases (SDR) family.

This is an uncharacterized protein from Myxococcus xanthus (strain DK1622).